Reading from the N-terminus, the 224-residue chain is Orotate phosphoribosyltransferase (224 aa).

5-phospho-alpha-D-ribose 1-diphosphate contacts are provided by residues lysine 26, 73-74, arginine 100, lysine 101, lysine 104, histidine 106, and 127-135; these read YK and EDVTTAGTS. 2 residues coordinate orotate: threonine 131 and arginine 160.

The protein belongs to the purine/pyrimidine phosphoribosyltransferase family. PyrE subfamily. Homodimer. Mg(2+) serves as cofactor.

The catalysed reaction is orotidine 5'-phosphate + diphosphate = orotate + 5-phospho-alpha-D-ribose 1-diphosphate. The protein operates within pyrimidine metabolism; UMP biosynthesis via de novo pathway; UMP from orotate: step 1/2. Catalyzes the transfer of a ribosyl phosphate group from 5-phosphoribose 1-diphosphate to orotate, leading to the formation of orotidine monophosphate (OMP). This chain is Orotate phosphoribosyltransferase, found in Clostridium acetobutylicum (strain ATCC 824 / DSM 792 / JCM 1419 / IAM 19013 / LMG 5710 / NBRC 13948 / NRRL B-527 / VKM B-1787 / 2291 / W).